The primary structure comprises 341 residues: MKKISNNIFLIMLIFGTLVTISSNSWLGAWMGLEINLLSFIPLMNDNKKNLLTSESSLKYFLTQAFASSILLFAIIMLMFLYNNNLSLYNSFNEILILSTLLLKSGAAPFHFWFPEVMEGLSWVNGLILMTWQKIAPLMLISYNFIYNFFMISIILSMLIGSLGGLNQTSIRKLMAFSSINHLGWMLLAMMNNEMLWMTYFLMYSLLSFSIVLMFNNFKLFYFNQIFNLSMMNPIIKLLIFLNLLSLGGLPPFLGFLPKWLVIQNLTAMNQLFILTISVCLTLITLYFYLRLSYSIFMLNYQKNSWMLKNNFNNKMSSISLIFNFISIGGLVMISMIYIIM.

The next 9 helical transmembrane spans lie at 8 to 28, 61 to 81, 95 to 115, 145 to 165, 174 to 191, 195 to 215, 238 to 258, 272 to 292, and 321 to 341; these read IFLI…SWLG, FLTQ…LMFL, ILIL…FWFP, FIYN…SLGG, LMAF…LAMM, MLWM…VLMF, LLIF…GFLP, LFIL…YLRL, and LIFN…YIIM.

It belongs to the complex I subunit 2 family.

It is found in the mitochondrion inner membrane. The enzyme catalyses a ubiquinone + NADH + 5 H(+)(in) = a ubiquinol + NAD(+) + 4 H(+)(out). Its function is as follows. Core subunit of the mitochondrial membrane respiratory chain NADH dehydrogenase (Complex I) that is believed to belong to the minimal assembly required for catalysis. Complex I functions in the transfer of electrons from NADH to the respiratory chain. The immediate electron acceptor for the enzyme is believed to be ubiquinone. This Anopheles gambiae (African malaria mosquito) protein is NADH-ubiquinone oxidoreductase chain 2 (mt:ND2).